The chain runs to 204 residues: MPFELPALPYPYDALEPHIDKETMNIHHTKHHNTYVTNLNAALEGHPDLQNKSLEELLSNLEALPESIRTAVRNNGGGHANHSLFWTILSPNGGGEPTGELADAINKKFGSFTAFKDEFSKAAAGRFGSGWAWLVVNNGELEITSTPNQDSPIMEGKTPILGLDVWEHAYYLKYQNRRPEYIAAFWNVVNWDEVAKRYSEAKAK.

His27 provides a ligand contact to Mn(2+). Phosphothreonine is present on residues Thr34 and Thr70. Residues His82, Asp164, and His168 each coordinate Mn(2+).

The protein belongs to the iron/manganese superoxide dismutase family. As to quaternary structure, homodimer. It depends on Mn(2+) as a cofactor.

It carries out the reaction 2 superoxide + 2 H(+) = H2O2 + O2. In terms of biological role, destroys superoxide anion radicals which are normally produced within the cells and which are toxic to biological systems. The sequence is that of Superoxide dismutase [Mn] (sodA) from Geobacillus stearothermophilus (Bacillus stearothermophilus).